Reading from the N-terminus, the 336-residue chain is NADH-quinone oxidoreductase subunit H (336 aa).

Helical transmembrane passes span 4-24, 75-95, 108-128, 154-174, 181-201, 233-253, 272-292, and 308-328; these read YILW…LVVA, YLFF…WAVI, LGLL…VIAG, MGFA…TGII, IWHW…IAGI, LFFL…SIMF, FVPG…MFLW, and LGWK…ACMV.

This sequence belongs to the complex I subunit 1 family. As to quaternary structure, NDH-1 is composed of 14 different subunits. Subunits NuoA, H, J, K, L, M, N constitute the membrane sector of the complex.

The protein resides in the cell inner membrane. It catalyses the reaction a quinone + NADH + 5 H(+)(in) = a quinol + NAD(+) + 4 H(+)(out). Functionally, NDH-1 shuttles electrons from NADH, via FMN and iron-sulfur (Fe-S) centers, to quinones in the respiratory chain. The immediate electron acceptor for the enzyme in this species is believed to be ubiquinone. Couples the redox reaction to proton translocation (for every two electrons transferred, four hydrogen ions are translocated across the cytoplasmic membrane), and thus conserves the redox energy in a proton gradient. This subunit may bind ubiquinone. In Francisella tularensis subsp. tularensis (strain FSC 198), this protein is NADH-quinone oxidoreductase subunit H.